A 71-amino-acid polypeptide reads, in one-letter code: UPF0346 protein SPG_0874 (71 aa).

The protein belongs to the UPF0346 family.

This Streptococcus pneumoniae serotype 19F (strain G54) protein is UPF0346 protein SPG_0874.